Consider the following 347-residue polypeptide: S-adenosylmethionine:tRNA ribosyltransferase-isomerase (347 aa).

This sequence belongs to the QueA family. Monomer.

It is found in the cytoplasm. The enzyme catalyses 7-aminomethyl-7-carbaguanosine(34) in tRNA + S-adenosyl-L-methionine = epoxyqueuosine(34) in tRNA + adenine + L-methionine + 2 H(+). It participates in tRNA modification; tRNA-queuosine biosynthesis. Transfers and isomerizes the ribose moiety from AdoMet to the 7-aminomethyl group of 7-deazaguanine (preQ1-tRNA) to give epoxyqueuosine (oQ-tRNA). This Ectopseudomonas mendocina (strain ymp) (Pseudomonas mendocina) protein is S-adenosylmethionine:tRNA ribosyltransferase-isomerase.